A 33-amino-acid chain; its full sequence is Photosystem II reaction center protein Psb30 (33 aa).

The chain crosses the membrane as a helical span at residues 5-25; it reads VVVQLGSLSLIVLAGPIIVLL.

The protein belongs to the Psb30/Ycf12 family. In terms of assembly, PSII is composed of 1 copy each of membrane proteins PsbA, PsbB, PsbC, PsbD, PsbE, PsbF, PsbH, PsbI, PsbJ, PsbK, PsbL, PsbM, PsbT, PsbX, PsbY, PsbZ, Psb30/Ycf12, peripheral proteins of the oxygen-evolving complex and a large number of cofactors. It forms dimeric complexes.

It localises to the plastid. It is found in the chloroplast thylakoid membrane. In terms of biological role, a core subunit of photosystem II (PSII), probably helps stabilize the reaction center. This is Photosystem II reaction center protein Psb30 from Mesostigma viride (Green alga).